A 144-amino-acid polypeptide reads, in one-letter code: Maximins 4/H3 type 3 (144 aa).

The N-terminal stretch at M1–A18 is a signal peptide. A propeptide spanning residues R19 to R43 is cleaved from the precursor. At N70 the chain carries Asparagine amide. Residues T74–R123 constitute a propeptide that is removed on maturation. An Isoleucine amide modification is found at I143.

This sequence belongs to the bombinin family. In terms of tissue distribution, expressed by the skin glands.

Its subcellular location is the secreted. In terms of biological role, maximin-4 shows antibacterial activity against both Gram-positive and Gram-negative bacteria. It also shows antimicrobial activity against the fungus C.albicans, but not against A.flavus nor P.uticale. It has little hemolytic activity. It does not possess a significant cytotoxicity against tumor cell lines. It does not possess a significant anti-HIV activity. Its function is as follows. Maximin-H3 shows antibacterial activity against both Gram-positive and Gram-negative bacteria. It also shows antimicrobial activity against the fungus C.albicans. Shows strong hemolytic activity. The protein is Maximins 4/H3 type 3 of Bombina maxima (Giant fire-bellied toad).